A 469-amino-acid chain; its full sequence is Glutamate--tRNA ligase 1 (469 aa).

The 'HIGH' region signature appears at 9-19; it reads PSPTGYLHVGG. Zn(2+) is bound by residues cysteine 98, cysteine 100, cysteine 125, and glutamate 127. Positions 236-240 match the 'KMSKS' region motif; that stretch reads RLSKR. Residue lysine 239 coordinates ATP.

The protein belongs to the class-I aminoacyl-tRNA synthetase family. Glutamate--tRNA ligase type 1 subfamily. In terms of assembly, monomer. Zn(2+) is required as a cofactor.

The protein localises to the cytoplasm. It catalyses the reaction tRNA(Glu) + L-glutamate + ATP = L-glutamyl-tRNA(Glu) + AMP + diphosphate. In terms of biological role, catalyzes the attachment of glutamate to tRNA(Glu) in a two-step reaction: glutamate is first activated by ATP to form Glu-AMP and then transferred to the acceptor end of tRNA(Glu). The chain is Glutamate--tRNA ligase 1 from Nitrosococcus oceani (strain ATCC 19707 / BCRC 17464 / JCM 30415 / NCIMB 11848 / C-107).